The chain runs to 152 residues: Transcriptional repressor NrdR (152 aa).

A zinc finger spans residues 3 to 34; that stretch reads CPFCHNEQSRVIDSRVIDSGTSIRRRRECAAC. Residues 46–136 form the ATP-cone domain; sequence LSVVKRNGLA…VYKSFESADD (91 aa).

It belongs to the NrdR family. It depends on Zn(2+) as a cofactor.

Its function is as follows. Negatively regulates transcription of bacterial ribonucleotide reductase nrd genes and operons by binding to NrdR-boxes. The polypeptide is Transcriptional repressor NrdR (Corynebacterium aurimucosum (strain ATCC 700975 / DSM 44827 / CIP 107346 / CN-1) (Corynebacterium nigricans)).